The following is a 174-amino-acid chain: Ribosome maturation factor RimM (174 aa).

One can recognise a PRC barrel domain in the interval 97–171 (SDGEYYWCDL…RMTVSLPEGL (75 aa)).

This sequence belongs to the RimM family. As to quaternary structure, binds ribosomal protein uS19.

Its subcellular location is the cytoplasm. An accessory protein needed during the final step in the assembly of 30S ribosomal subunit, possibly for assembly of the head region. Essential for efficient processing of 16S rRNA. May be needed both before and after RbfA during the maturation of 16S rRNA. It has affinity for free ribosomal 30S subunits but not for 70S ribosomes. This is Ribosome maturation factor RimM from Geotalea daltonii (strain DSM 22248 / JCM 15807 / FRC-32) (Geobacter daltonii).